Reading from the N-terminus, the 149-residue chain is Deoxyuridine 5'-triphosphate nucleotidohydrolase (149 aa).

Substrate contacts are provided by residues 68–70 (RSG), N81, 85–87 (LID), and M95.

This sequence belongs to the dUTPase family. Mg(2+) is required as a cofactor.

The enzyme catalyses dUTP + H2O = dUMP + diphosphate + H(+). It functions in the pathway pyrimidine metabolism; dUMP biosynthesis; dUMP from dCTP (dUTP route): step 2/2. In terms of biological role, this enzyme is involved in nucleotide metabolism: it produces dUMP, the immediate precursor of thymidine nucleotides and it decreases the intracellular concentration of dUTP so that uracil cannot be incorporated into DNA. The protein is Deoxyuridine 5'-triphosphate nucleotidohydrolase of Polynucleobacter necessarius subsp. necessarius (strain STIR1).